The sequence spans 557 residues: Tektin-5 (557 aa).

The stretch at 302-386 forms a coiled coil; that stretch reads DNIRHAQNMR…LLERAIVAKE (85 aa). Tandem repeats lie at residues 507–512, 513–518, 519–524, 525–530, 531–536, and 537–541. The tract at residues 507-541 is 6 X 6 AA approximate tandem repeats of C-[GSK]-G-[GSPH]-A-[SLP]; it reads CSGSALCKGPASCGGGASCGGGASCGGHAPCGSAL.

This sequence belongs to the tektin family. As to quaternary structure, microtubule inner protein component of sperm flagellar doublet microtubules. Interacts with TEKT3. Ubiquitinated, leading to its degradation. Deubiquitinated by USP16, promoting its stability. Strongly expressed in germ cells of the testis (at protein level). Expressed in spermatozoa. Also detected in brain.

It localises to the cytoplasm. The protein localises to the cytoskeleton. Its subcellular location is the flagellum axoneme. Sperm-specific microtubule inner protein (MIP) part of the dynein-decorated doublet microtubules (DMTs) in flagellar axoneme. Forms an extensive interaction network in different conformations that reinforces the helix bundle composed by other tektin proteins (TEKT1 to TEKT4) and MIPs to anchor the tektin bundle onto the tubulin wall of A-tubule of the sperm flagellum. In Mus musculus (Mouse), this protein is Tektin-5.